The chain runs to 224 residues: MSAVGAATPYLHHPGDSHSGRVSFLGAQLPPEVAAMARLLGDLDRSTFRKLLKFVVSSLQGEDCREAVQRLGVSANLPEEQLGALLAGMHTLLQQALRLPPTSLKPDTFRDQLQELCIPQDLVGDLASVVFGSQRPLLDSVAQQQGAWLPHVADFRWRVDVAISTSALARSLQPSVLMQLKLSDGSAYRFEVPTAKFQELRYSVALVLKEMADLEKRCERRLQD.

Position 2 is an N-acetylserine (Ser-2). A COMM domain is found at 151-215 (HVADFRWRVD…LVLKEMADLE (65 aa)).

Belongs to the COMM domain-containing protein 5 family. Component of the commander complex consisting of the CCC subcomplex and the retriever subcomplex. Component of the CCC (COMMD/CCDC22/CCDC93) subcomplex consisting of COMMD1, COMMD2, COMMD3, COMMD4, COMMD5, COMMD6, COMMD7, COMMD8, COMMD9, COMMD10, CCDC22 and CCDC93; within the complex forms a heterodimer with COMMD10. Interacts (via COMM domain) with COMMD1 (via COMM domain). Interacts with RELA, RELB, NFKB1/p105. Interacts with CCDC22, CCDC93, SCNN1B, CUL2, CUL3, CUL4A, CUL4B, CUL7. As to expression, highly expressed in heart, stomach, jejunum, kidney, liver, and adrenal gland. Expression was generally higher in adult organs than in fetal tissues, particularly in heart, kidney, and liver.

Its subcellular location is the cytoplasm. It localises to the nucleus. In terms of biological role, scaffold protein in the commander complex that is essential for endosomal recycling of transmembrane cargos; the commander complex is composed of the CCC subcomplex and the retriever subcomplex. May modulate activity of cullin-RING E3 ubiquitin ligase (CRL) complexes. Negatively regulates cell proliferation. Negatively regulates cell cycle G2/M phase transition probably by transactivating p21/CDKN1A through the p53/TP53-independent signaling pathway. Involved in kidney proximal tubule morphogenesis. Down-regulates activation of NF-kappa-B. The sequence is that of COMM domain-containing protein 5 (COMMD5) from Homo sapiens (Human).